The chain runs to 415 residues: Multifunctional CCA protein (415 aa).

ATP contacts are provided by G8 and R11. CTP contacts are provided by G8 and R11. Mg(2+)-binding residues include D21 and D23. ATP-binding residues include R91, R143, and R146. 3 residues coordinate CTP: R91, R143, and R146. One can recognise an HD domain in the interval 232–333 (TGVHVMMVID…TRLLERCDAL (102 aa)).

It belongs to the tRNA nucleotidyltransferase/poly(A) polymerase family. Bacterial CCA-adding enzyme type 1 subfamily. As to quaternary structure, monomer. Can also form homodimers and oligomers. It depends on Mg(2+) as a cofactor. The cofactor is Ni(2+).

It carries out the reaction a tRNA precursor + 2 CTP + ATP = a tRNA with a 3' CCA end + 3 diphosphate. The catalysed reaction is a tRNA with a 3' CCA end + 2 CTP + ATP = a tRNA with a 3' CCACCA end + 3 diphosphate. Catalyzes the addition and repair of the essential 3'-terminal CCA sequence in tRNAs without using a nucleic acid template. Adds these three nucleotides in the order of C, C, and A to the tRNA nucleotide-73, using CTP and ATP as substrates and producing inorganic pyrophosphate. tRNA 3'-terminal CCA addition is required both for tRNA processing and repair. Also involved in tRNA surveillance by mediating tandem CCA addition to generate a CCACCA at the 3' terminus of unstable tRNAs. While stable tRNAs receive only 3'-terminal CCA, unstable tRNAs are marked with CCACCA and rapidly degraded. This is Multifunctional CCA protein from Cupriavidus pinatubonensis (strain JMP 134 / LMG 1197) (Cupriavidus necator (strain JMP 134)).